The primary structure comprises 218 residues: Protein-L-isoaspartate O-methyltransferase (218 aa).

Residue Ser-69 is part of the active site.

Belongs to the methyltransferase superfamily. L-isoaspartyl/D-aspartyl protein methyltransferase family.

It localises to the cytoplasm. It catalyses the reaction [protein]-L-isoaspartate + S-adenosyl-L-methionine = [protein]-L-isoaspartate alpha-methyl ester + S-adenosyl-L-homocysteine. Its function is as follows. Catalyzes the methyl esterification of L-isoaspartyl residues in peptides and proteins that result from spontaneous decomposition of normal L-aspartyl and L-asparaginyl residues. It plays a role in the repair and/or degradation of damaged proteins. The polypeptide is Protein-L-isoaspartate O-methyltransferase (Aromatoleum aromaticum (strain DSM 19018 / LMG 30748 / EbN1) (Azoarcus sp. (strain EbN1))).